A 427-amino-acid polypeptide reads, in one-letter code: Isoprenylcysteine alpha-carbonyl methylesterase ICME (427 aa).

The interval 26–59 (EVLPDEDSDRTTLLNGEPLRRRVSGKSPVDEGPR) is disordered. 2 consecutive transmembrane segments (helical) span residues 102 to 122 (LLALTCYAMLLMPGFLQVAYS) and 157 to 177 (VVVFVTGGAWIIGYKAWGSLL). Residues 163–165 (GGA) and 234–236 (QSA) contribute to the substrate site. Active-site residues include serine 235, aspartate 336, and histidine 368.

It belongs to the AB hydrolase superfamily. Isoprenylcysteine methylesterase family. As to expression, expressed in roots, rosette and cauline leaves, stems, flowers and siliques.

The protein localises to the endoplasmic reticulum membrane. Its subcellular location is the golgi apparatus membrane. The catalysed reaction is [protein]-C-terminal S-[(2E,6E)-farnesyl]-L-cysteine methyl ester + H2O = [protein]-C-terminal S-[(2E,6E)-farnesyl]-L-cysteine + methanol + H(+). Its function is as follows. Catalyzes the demethylation of isoprenylcysteine methylesters. In vitro, is specific for N-acetyl-S-farnesyl-L-cysteine methyl ester (AFCme) and has low activity toward N-acetyl-S-geranyl-L-cysteine methyl ester (AGCme). Acts as a positive regulator of ABA signaling. May be involved in the demethylation and inactivation of isoprenylated negative regulators of abscisic acid (ABA) signaling. Carboxyl methylation is a reversible and potentially regulated step in the post-translational modification of prenylated proteins. This is Isoprenylcysteine alpha-carbonyl methylesterase ICME from Arabidopsis thaliana (Mouse-ear cress).